The primary structure comprises 175 residues: Type II restriction enzyme NgoBV (175 aa).

It catalyses the reaction Endonucleolytic cleavage of DNA to give specific double-stranded fragments with terminal 5'-phosphates.. Its function is as follows. A P subtype restriction enzyme that recognizes the double-stranded sequence 5'-GGNNCC-3'; the cleavage site is unknown. The polypeptide is Type II restriction enzyme NgoBV (ngoBVR) (Neisseria gonorrhoeae).